The chain runs to 1023 residues: Probable beta-glucosidase E (1023 aa).

Positions 1–51 are disordered; sequence MPKSYTPVHDSIPEEDHFSSDDESNFRLHRIDRSASRSQSPKENEGEPSIL. At 1–128 the chain is on the cytoplasmic side; it reads MPKSYTPVHD…AVYYSKTWWR (128 aa). Residues 11–45 are compositionally biased toward basic and acidic residues; it reads SIPEEDHFSSDDESNFRLHRIDRSASRSQSPKENE. Residues 129–149 traverse the membrane as a helical; Signal-anchor for type II membrane protein segment; the sequence is TLVVVIIALGLLVWGFLKYAS. Residues 150 to 1023 are Extracellular-facing; it reads TRGDIWEEYD…NLPLGKPFDP (874 aa). Asn-199 and Asn-387 each carry an N-linked (GlcNAc...) asparagine glycan. Asp-415 is a catalytic residue. N-linked (GlcNAc...) asparagine glycans are attached at residues Asn-458 and Asn-497. 2 disordered regions span residues 485–515 and 822–841; these read WESPAPDGDGGPNFSSWTDDEFGFRYPGSPG and NPSRLPAARPPDAVAPPSYD. Positions 827-838 are enriched in low complexity; that stretch reads PAARPPDAVAPP. N-linked (GlcNAc...) asparagine glycosylation is present at Asn-848. The disordered stretch occupies residues 873–909; the sequence is ATTPPPPNPEASGSATDQKPHRTKPSDAGGGAGGNPS. 2 N-linked (GlcNAc...) asparagine glycosylation sites follow: Asn-964 and Asn-979.

This sequence belongs to the glycosyl hydrolase 3 family.

The protein resides in the cell membrane. It carries out the reaction Hydrolysis of terminal, non-reducing beta-D-glucosyl residues with release of beta-D-glucose.. It functions in the pathway glycan metabolism; cellulose degradation. Its function is as follows. Beta-glucosidases are one of a number of cellulolytic enzymes involved in the degradation of cellulosic biomass. Catalyzes the last step releasing glucose from the inhibitory cellobiose. This Emericella nidulans (strain FGSC A4 / ATCC 38163 / CBS 112.46 / NRRL 194 / M139) (Aspergillus nidulans) protein is Probable beta-glucosidase E (bglE).